The primary structure comprises 35 residues: Sorbin and SH3 domain-containing protein 1 (35 aa).

Residues 1-8 form the SoHo domain; that stretch reads LNRDDDSD. Ser-15 is subject to Phosphoserine. The SH3 domain occupies 22 to 35; the sequence is CDDGWFVGTSRRTK.

As to quaternary structure, interacts with the long isoform of AFDN and with VCL. AFDN and VCL bind to SORBS1 in a competitive manner and do not form a ternary complex. Interacts with ABL1, CBL, CBLB and INPPL1/SHIP2 through the third SH3 domain. Interaction with ABL1 occurs only after insulin stimulation while this has no effect on the interaction with INPPL1. Interacts with the insulin receptor but dissociates from it following insulin stimulation. Also interacts with SCA7, PTK2/FAK1 and flotillin. Interacts (via SH3 domain 2) with PXN. Interacts (via third SH3 domain) with the Ten-1 ICD form of TENM1; the interaction induces the translocation of SORBS1 to the nucleus. In terms of processing, O-glycosylated.

It is found in the cell junction. It localises to the adherens junction. The protein localises to the cell membrane. Its subcellular location is the cytoplasm. The protein resides in the cytoskeleton. It is found in the focal adhesion. It localises to the nucleus. The protein localises to the nucleus matrix. In terms of biological role, plays a role in tyrosine phosphorylation of CBL by linking CBL to the insulin receptor. Required for insulin-stimulated glucose transport. Involved in formation of actin stress fibers and focal adhesions. The protein is Sorbin and SH3 domain-containing protein 1 of Rattus norvegicus (Rat).